The primary structure comprises 223 residues: ATP-dependent dethiobiotin synthetase BioD (223 aa).

A Mg(2+)-binding site is contributed by Thr-16. Lys-37 is a catalytic residue. Ser-41 is a binding site for substrate. Residues Asp-50 and Glu-111 each coordinate Mg(2+). ATP is bound by residues Asp-50, 111–114 (EGAG), and 171–172 (NR).

The protein belongs to the dethiobiotin synthetase family. As to quaternary structure, homodimer. It depends on Mg(2+) as a cofactor.

Its subcellular location is the cytoplasm. It carries out the reaction (7R,8S)-7,8-diammoniononanoate + CO2 + ATP = (4R,5S)-dethiobiotin + ADP + phosphate + 3 H(+). It participates in cofactor biosynthesis; biotin biosynthesis; biotin from 7,8-diaminononanoate: step 1/2. In terms of biological role, catalyzes a mechanistically unusual reaction, the ATP-dependent insertion of CO2 between the N7 and N8 nitrogen atoms of 7,8-diaminopelargonic acid (DAPA, also called 7,8-diammoniononanoate) to form a ureido ring. This chain is ATP-dependent dethiobiotin synthetase BioD, found in Anaeromyxobacter sp. (strain K).